Consider the following 506-residue polypeptide: MSDDDDFMHDSADEEYDFEYEDADDDETGDIGIENKYYNAKQIKVDNPEEAIDEFLGVPALEQDKGDWGFKGLKQAIKLEFKLGRYSDAVEHYRELLTYVKSAVTRNYSEKSINNMLDYIEKGSDDEKAYQCMEEFYSLTLNSFQNTNNERLWLKTNIKLARLWLERREYGQLSKKVRELHRACQREDGSDDPSKGTYLLELYALEIQMYAETKNNKRLKALYQRALRVRSAVPHPKIMGIIRECGGKMHMSEENWEEAQSDFFESFRNYDEAGSMQRIQVLKYLVLTTMLMKSDINPFHSQETKPYKTDPRISAMTDLVDAFQRDDIHAYEEVLSKNPDVLADPFIAENIDEVSRNMRTKAILKLIAPYTRFTLSFISKHIKISVTEAQDILSFLILDKKLNAKIDQESGTVVVESASDVERLRSVEEWNESLRTLWQVTLKDGDGFKNDDVSQPTGIGMRGPLLYQSGLDDDTAGLLRSSGHRFRRGGKGSKAGGGLGMKTGLF.

One can recognise a PCI domain in the interval 252–420; the sequence is SEENWEEAQS…GTVVVESASD (169 aa). The span at 482-491 shows a compositional bias: basic residues; it reads SGHRFRRGGK. Positions 482–506 are disordered; it reads SGHRFRRGGKGSKAGGGLGMKTGLF. A compositionally biased stretch (gly residues) spans 492-506; that stretch reads GSKAGGGLGMKTGLF.

Belongs to the CSN2 family. In terms of assembly, component of the COP9 signalosome (CSN) complex.

The protein resides in the cytoplasm. Its subcellular location is the nucleus. Functionally, component of the COP9 signalosome (CSN) complex that acts as an regulator of the ubiquitin (Ubl) conjugation pathway by mediating the deneddylation of the cullin subunit of SCF-type E3 ubiquitin-protein ligase complexes. The CSN complex seems to link protein degradation to sexual development. Required for fruit body formation. This is COP9 signalosome complex subunit 2 (csnB) from Emericella nidulans (strain FGSC A4 / ATCC 38163 / CBS 112.46 / NRRL 194 / M139) (Aspergillus nidulans).